The sequence spans 846 residues: Protein kintoun (846 aa).

Disordered regions lie at residues 1 to 21 (MSTA…ERAD), 377 to 412 (DSGV…PPDP), 581 to 657 (HTSI…DSTI), and 743 to 846 (HDSS…DDEI). Serine 378 carries the post-translational modification Phosphoserine. The segment covering 399–408 (PETPELETAA) has biased composition (low complexity). 2 stretches are compositionally biased toward basic residues: residues 596 to 612 (LHKK…KKQR) and 750 to 766 (QRKK…RAQQ). A Phosphoserine modification is found at serine 770. The segment covering 821–832 (TRQDHADADAKN) has biased composition (basic and acidic residues).

It belongs to the PIH1 family. Kintoun subfamily. In terms of assembly, interacts with Pp1alpha-96A, Pp1-87B, Pp1-13C and flw.

It is found in the cytoplasm. Required for cytoplasmic pre-assembly of axonemal dyneins, thereby playing a central role in motility in cilia and flagella. Involved in pre-assembly of dynein arm complexes in the cytoplasm before intraflagellar transport loads them for the ciliary compartment. The protein is Protein kintoun of Drosophila pseudoobscura pseudoobscura (Fruit fly).